The sequence spans 791 residues: DNA repair and recombination protein RAD54-like (791 aa).

Residues 1–20 are compositionally biased toward polar residues; that stretch reads MRRSLAPSQRIGQSTASRNA. Residues 1 to 53 are disordered; it reads MRRSLAPSQRIGQSTASRNAFTPPLLQKKNKRACQKDLRLDTDADEDKERKRF. The required for chromatin remodeling, strand pairing activities and coupling of ATPase activity stretch occupies residues 2 to 9; that stretch reads RRSLAPSQ. Thr-22 is subject to Phosphothreonine. A compositionally biased stretch (basic and acidic residues) spans 34-53; it reads CQKDLRLDTDADEDKERKRF. The Helicase ATP-binding domain maps to 175–349; that stretch reads EGKKGDFNGC…FSLVNFVNPE (175 aa). 188-195 is an ATP binding site; it reads DEMGLGKT. The DEGH box motif lies at 300-303; that stretch reads DEGH. The Helicase C-terminal domain occupies 506–663; the sequence is LLDFMLAAIR…NNESSEKHFT (158 aa). The tract at residues 747–791 is disordered; sequence KEVVESPESAAAEAESVEEESQPTQRKRPSPPLSDDSADEDFIGF. Acidic residues predominate over residues 782 to 791; the sequence is DSADEDFIGF.

The protein belongs to the SNF2/RAD54 helicase family. As to quaternary structure, interacts (via N-terminus) with spn-A/Rad51.

It localises to the nucleus. Its function is as follows. Involved in mitotic DNA repair and meiotic recombination. Functions in the recombinational DNA repair pathway. Essential for interhomolog gene conversion (GC), but may have a less important role in intersister GC than spn-A/Rad51. In the presence of DNA, spn-A/Rad51 enhances the ATPase activity of okr/Rad54. The polypeptide is DNA repair and recombination protein RAD54-like (Drosophila ananassae (Fruit fly)).